Here is a 222-residue protein sequence, read N- to C-terminus: V-type ATP synthase subunit D (222 aa).

It belongs to the V-ATPase D subunit family.

Produces ATP from ADP in the presence of a proton gradient across the membrane. The chain is V-type ATP synthase subunit D from Deinococcus geothermalis (strain DSM 11300 / CIP 105573 / AG-3a).